The sequence spans 192 residues: dCTP deaminase, dUMP-forming (192 aa).

DCTP contacts are provided by residues 101-106 (KSSLGR), aspartate 119, 127-129 (TLE), glutamine 148, tyrosine 162, and glutamine 174. Glutamate 129 acts as the Proton donor/acceptor in catalysis. Residues 162 to 192 (YGSGADGSRYQGQRGPTASRSHVKFHRTHVE) are disordered. A compositionally biased stretch (polar residues) spans 171–181 (YQGQRGPTASR). Basic residues predominate over residues 182-192 (SHVKFHRTHVE).

The protein belongs to the dCTP deaminase family. In terms of assembly, homotrimer.

It carries out the reaction dCTP + 2 H2O = dUMP + NH4(+) + diphosphate. Its pathway is pyrimidine metabolism; dUMP biosynthesis; dUMP from dCTP: step 1/1. Bifunctional enzyme that catalyzes both the deamination of dCTP to dUTP and the hydrolysis of dUTP to dUMP without releasing the toxic dUTP intermediate. This chain is dCTP deaminase, dUMP-forming, found in Beutenbergia cavernae (strain ATCC BAA-8 / DSM 12333 / CCUG 43141 / JCM 11478 / NBRC 16432 / NCIMB 13614 / HKI 0122).